Here is a 146-residue protein sequence, read N- to C-terminus: uncharacterized protein (146 aa).

Residues 1 to 137 (MLSQEFFNSF…TINVMNQIHE (137 aa)) form the HTH marR-type domain.

This is an uncharacterized protein from Staphylococcus aureus (strain N315).